Here is a 480-residue protein sequence, read N- to C-terminus: Siroheme synthase (480 aa).

The precorrin-2 dehydrogenase /sirohydrochlorin ferrochelatase stretch occupies residues 1–203 (MNYFPIFANL…QQTAQAEQEL (203 aa)). NAD(+)-binding positions include 22 to 23 (SV) and 43 to 44 (NQ). Ser128 is modified (phosphoserine). Residues 214 to 480 (GFVSLVGAGP…GGLNAGQRAA (267 aa)) form a uroporphyrinogen-III C-methyltransferase region. Pro223 is an S-adenosyl-L-methionine binding site. The active-site Proton acceptor is Asp246. Lys268 (proton donor) is an active-site residue. S-adenosyl-L-methionine is bound by residues 299-301 (GGD), Val304, 329-330 (TA), Met381, and Gly410.

The protein in the N-terminal section; belongs to the precorrin-2 dehydrogenase / sirohydrochlorin ferrochelatase family. This sequence in the C-terminal section; belongs to the precorrin methyltransferase family.

It carries out the reaction uroporphyrinogen III + 2 S-adenosyl-L-methionine = precorrin-2 + 2 S-adenosyl-L-homocysteine + H(+). It catalyses the reaction precorrin-2 + NAD(+) = sirohydrochlorin + NADH + 2 H(+). The enzyme catalyses siroheme + 2 H(+) = sirohydrochlorin + Fe(2+). It participates in cofactor biosynthesis; adenosylcobalamin biosynthesis; precorrin-2 from uroporphyrinogen III: step 1/1. It functions in the pathway cofactor biosynthesis; adenosylcobalamin biosynthesis; sirohydrochlorin from precorrin-2: step 1/1. The protein operates within porphyrin-containing compound metabolism; siroheme biosynthesis; precorrin-2 from uroporphyrinogen III: step 1/1. Its pathway is porphyrin-containing compound metabolism; siroheme biosynthesis; siroheme from sirohydrochlorin: step 1/1. It participates in porphyrin-containing compound metabolism; siroheme biosynthesis; sirohydrochlorin from precorrin-2: step 1/1. Functionally, multifunctional enzyme that catalyzes the SAM-dependent methylations of uroporphyrinogen III at position C-2 and C-7 to form precorrin-2 via precorrin-1. Then it catalyzes the NAD-dependent ring dehydrogenation of precorrin-2 to yield sirohydrochlorin. Finally, it catalyzes the ferrochelation of sirohydrochlorin to yield siroheme. The polypeptide is Siroheme synthase (Neisseria meningitidis serogroup C (strain 053442)).